A 186-amino-acid polypeptide reads, in one-letter code: Ribosome-recycling factor (186 aa).

This sequence belongs to the RRF family.

It is found in the cytoplasm. Its function is as follows. Responsible for the release of ribosomes from messenger RNA at the termination of protein biosynthesis. May increase the efficiency of translation by recycling ribosomes from one round of translation to another. This Chlorobaculum tepidum (strain ATCC 49652 / DSM 12025 / NBRC 103806 / TLS) (Chlorobium tepidum) protein is Ribosome-recycling factor.